The chain runs to 65 residues: Kassorin-M (65 aa).

The N-terminal stretch at 1-22 (MLTLKKSMLLLFFLGMVSFSLA) is a signal peptide. Positions 23–51 (DDKREDEAEEGEDKRADEGEEKRAAEKKR) are excised as a propeptide. The disordered stretch occupies residues 24-45 (DKREDEAEEGEDKRADEGEEKR). Leu64 carries the post-translational modification Leucine amide.

This sequence belongs to the frog skin active peptide (FSAP) family. Brevinin subfamily. In terms of tissue distribution, expressed by the skin glands.

The protein resides in the secreted. In terms of biological role, induces contraction of smooth muscle in isolated guinea pig urinary bladder (EC50=4.66 nM). Has no antimicrobial activity against the Gram-positive bacterium S.aureus, the Gram-negative bacterium E.coli and the yeast C.albicans. Elicits histamine release from rat peritoneal mast cells. The chain is Kassorin-M from Phlyctimantis maculatus (Red-legged running frog).